A 356-amino-acid polypeptide reads, in one-letter code: Replication factor C subunit 3 (356 aa).

Lysine 20 is subject to N6-acetyllysine. Serine 125 carries the phosphoserine modification.

This sequence belongs to the activator 1 small subunits family. In terms of assembly, subunit of the RFC complex, an heteropentameric complex consisting of a large subunit RFC1 and four small subunits RFC2, RFC3, RFC4 and RFC5; the RFC complex interacts with PCNA. Forms an heterotetrameric complex with RFC2, RFC4 and RFC5; this complex has ATPase activity but is not stimulated by PCNA. The heterotetramer of subunits RFC2, RFC3, RFC4 and RFC5 interacts with RAD17. Interacts with CNTD1; this interaction facilitates crossover formation.

It localises to the nucleus. In terms of biological role, subunit of the replication factor C (RFC) complex which acts during elongation of primed DNA templates by DNA polymerases delta and epsilon, and is necessary for ATP-dependent loading of proliferating cell nuclear antigen (PCNA) onto primed DNA. The sequence is that of Replication factor C subunit 3 (Rfc3) from Mus musculus (Mouse).